The chain runs to 262 residues: 2-oxo-tetronate isomerase (262 aa).

The active-site Proton donor/acceptor is Glu143. Positions 143, 178, 204, and 240 each coordinate Mg(2+). Catalysis depends on Glu240, which acts as the Proton donor/acceptor.

Belongs to the hyi family. OtnI subfamily.

The enzyme catalyses 2-dehydro-L-erythronate = 3-dehydro-L-erythronate. It carries out the reaction 2-dehydro-D-erythronate = 3-dehydro-D-erythronate. Its function is as follows. Catalyzes the isomerization of 2-oxo-tetronate to 3-oxo-tetronate. This is 2-oxo-tetronate isomerase from Pectobacterium atrosepticum (strain SCRI 1043 / ATCC BAA-672) (Erwinia carotovora subsp. atroseptica).